We begin with the raw amino-acid sequence, 229 residues long: uncharacterized protein (229 aa).

Residues 61–229 are disordered; sequence MQAEDKVSKP…TESEDKPKRG (169 aa). The segment covering 109–128 has biased composition (basic and acidic residues); that stretch reads QQEKQQPEKAVVEQQEKQQP. Positions 166–194 are enriched in low complexity; sequence QPEQPERQQQAQPERQQQAQPERQQQAQP. Residues 195–204 are compositionally biased toward acidic residues; sequence EEAEDAEQEP. Basic and acidic residues predominate over residues 218–229; sequence TQTESEDKPKRG.

This is an uncharacterized protein from Frog virus 3 (isolate Goorha) (FV-3).